The following is a 512-amino-acid chain: Sporulation-regulated protein 3 (512 aa).

Residues 31-68 (RQSSQGQYAVDSHPPKSPELKHRRQRSSSFVNGKCRNR) form a disordered region. The region spanning 106–365 (NGIDFTLMVA…EKCRSEMLRT (260 aa)) is the Septin-type G domain. The segment at 116–123 (GQSGLGKT) is G1 motif. GTP contacts are provided by residues 116–123 (GQSGLGKT), G168, 247–255 (KSDLLTKEE), and R315. Positions 165–168 (DTPG) are G3 motif. Residues 246–249 (AKSD) are G4 motif. 2 coiled-coil regions span residues 376 to 406 (TKSVDITEEQRKFLEEEMNFDEIEENKLKNY) and 451 to 496 (RDWK…KSSN).

Belongs to the TRAFAC class TrmE-Era-EngA-EngB-Septin-like GTPase superfamily. Septin GTPase family. In terms of assembly, interacts with other septin proteins such as SPR28 to form a ring at the bud neck.

The protein resides in the prospore membrane. The protein localises to the bud neck. Its function is as follows. Septins are GTPases involved in cytokinesis that assemble into filaments and form a ring at the cleavage site. May act by recruiting MYO1 and HOF1, a protein involved in septation, to the site of cleavage. Septins are also involved in cell morphogenesis, bud site selection, chitin deposition, cell cycle regulation, cell compartmentalization and spore wall formation. This Saccharomyces cerevisiae (strain ATCC 204508 / S288c) (Baker's yeast) protein is Sporulation-regulated protein 3 (SPR3).